A 132-amino-acid chain; its full sequence is Small ribosomal subunit protein uS8 (132 aa).

It belongs to the universal ribosomal protein uS8 family. As to quaternary structure, part of the 30S ribosomal subunit. Contacts proteins S5 and S12.

In terms of biological role, one of the primary rRNA binding proteins, it binds directly to 16S rRNA central domain where it helps coordinate assembly of the platform of the 30S subunit. This chain is Small ribosomal subunit protein uS8, found in Leptospira biflexa serovar Patoc (strain Patoc 1 / Ames).